Reading from the N-terminus, the 308-residue chain is Ycf92-like protein (308 aa).

5 consecutive transmembrane segments (helical) span residues 41 to 61 (FANNLWRILLVALLILFTLIA), 75 to 95 (LLTLSFFVLAIAAISPDGLGV), 153 to 173 (ISTIIFTVIYSTNLYLLTTAP), 192 to 212 (IPVTEITLTLTLSLRFIPLVL), and 288 to 308 (WLAIASLTIFWGIRVVFGNQI).

It belongs to the ycf92 family.

The protein localises to the membrane. In Nostoc sp. (strain PCC 7120 / SAG 25.82 / UTEX 2576), this protein is Ycf92-like protein.